The sequence spans 887 residues: DNA mismatch repair protein MutS (887 aa).

Position 621–628 (621–628 (GPNMGGKS)) interacts with ATP. Residues 828 to 853 (AEPEPNKPAAAAKTKPASPQPDLFAS) form a disordered region. Residues 834-848 (KPAAAAKTKPASPQP) show a composition bias toward low complexity.

The protein belongs to the DNA mismatch repair MutS family.

Its function is as follows. This protein is involved in the repair of mismatches in DNA. It is possible that it carries out the mismatch recognition step. This protein has a weak ATPase activity. This is DNA mismatch repair protein MutS from Saccharophagus degradans (strain 2-40 / ATCC 43961 / DSM 17024).